We begin with the raw amino-acid sequence, 456 residues long: Probable galactarate/D-glucarate transporter GudP (456 aa).

Helical transmembrane passes span 11–31, 51–71, 78–96, 102–119, 246–266, 280–300, 317–337, 341–361, 381–401, and 408–428; these read YLILLMLFLVTTINYADRATI, YIFSAFGWAYVLGQIPGGWLL, KVYAGSIFTWSLFTLLQGY, ISTAVVLLFLLRFMVGLA, IYLGQFCINALTYFFLTWFPV, GIIASLPAICGFLGGVLGGVI, TPIVCGMVLSMSMIICNYVDA, VVCFMALAFFGKAIGALGWAV, FGNLSSISTPIIIGYIIAATG, and SSWVPTHSFAAISYLFIVGEI.

Belongs to the major facilitator superfamily. Phthalate permease family.

It is found in the cell inner membrane. It catalyses the reaction galactarate(in) + H(+)(in) = galactarate(out) + H(+)(out). It carries out the reaction D-glucarate(in) + H(+)(in) = D-glucarate(out) + H(+)(out). Its function is as follows. Probably involved in the uptake of galactarate and/or D-glucarate. The sequence is that of Probable galactarate/D-glucarate transporter GudP (gudP) from Pseudomonas putida (Arthrobacter siderocapsulatus).